The following is a 399-amino-acid chain: Lipase member K (399 aa).

The N-terminal stretch at 1-19 (MWQLLAAACWMLLLGSMYG) is a signal peptide. An AB hydrolase-1 domain is found at 78-378 (PAVYLQHGLI…HYNHVDFYLG (301 aa)). The Nucleophile role is filled by serine 172. A disulfide bridge connects residues cysteine 246 and cysteine 255. N-linked (GlcNAc...) asparagine glycosylation is found at asparagine 271 and asparagine 327. Catalysis depends on charge relay system residues aspartate 343 and histidine 372.

The protein belongs to the AB hydrolase superfamily. Lipase family. Exclusively expressed in the epidermis within the granular keratinocytes.

It localises to the secreted. Plays a highly specific role in the last step of keratinocyte differentiation. May have an essential function in lipid metabolism of the most differentiated epidermal layers. The polypeptide is Lipase member K (LIPK) (Homo sapiens (Human)).